A 637-amino-acid polypeptide reads, in one-letter code: 3D-(3,5/4)-trihydroxycyclohexane-1,2-dione hydrolase (637 aa).

E66 is a binding site for thiamine diphosphate. A thiamine pyrophosphate binding region spans residues 442-522; the sequence is SLPGDLQRLW…INVLLFDNSG (81 aa). Mg(2+) contacts are provided by D493 and N520.

This sequence belongs to the TPP enzyme family. Mg(2+) serves as cofactor. It depends on thiamine diphosphate as a cofactor.

It carries out the reaction 3D-3,5/4-trihydroxycyclohexane-1,2-dione + H2O = 5-deoxy-D-glucuronate + H(+). It functions in the pathway polyol metabolism; myo-inositol degradation into acetyl-CoA; acetyl-CoA from myo-inositol: step 3/7. In terms of biological role, involved in the cleavage of the C1-C2 bond of 3D-(3,5/4)-trihydroxycyclohexane-1,2-dione (THcHDO) to yield 5-deoxy-glucuronate (5DG). The polypeptide is 3D-(3,5/4)-trihydroxycyclohexane-1,2-dione hydrolase (iolD) (Bacillus subtilis (strain 168)).